The primary structure comprises 398 residues: NADH-quinone oxidoreductase subunit D (398 aa).

The protein belongs to the complex I 49 kDa subunit family. In terms of assembly, NDH-1 is composed of 14 different subunits. Subunits NuoB, C, D, E, F, and G constitute the peripheral sector of the complex.

It is found in the cell inner membrane. It carries out the reaction a quinone + NADH + 5 H(+)(in) = a quinol + NAD(+) + 4 H(+)(out). Functionally, NDH-1 shuttles electrons from NADH, via FMN and iron-sulfur (Fe-S) centers, to quinones in the respiratory chain. The immediate electron acceptor for the enzyme in this species is believed to be ubiquinone. Couples the redox reaction to proton translocation (for every two electrons transferred, four hydrogen ions are translocated across the cytoplasmic membrane), and thus conserves the redox energy in a proton gradient. This chain is NADH-quinone oxidoreductase subunit D, found in Bradyrhizobium sp. (strain ORS 278).